The sequence spans 339 residues: Phenylalanine--tRNA ligase alpha subunit (339 aa).

Glutamate 250 serves as a coordination point for Mg(2+).

It belongs to the class-II aminoacyl-tRNA synthetase family. Phe-tRNA synthetase alpha subunit type 1 subfamily. In terms of assembly, tetramer of two alpha and two beta subunits. Requires Mg(2+) as cofactor.

It is found in the cytoplasm. The catalysed reaction is tRNA(Phe) + L-phenylalanine + ATP = L-phenylalanyl-tRNA(Phe) + AMP + diphosphate + H(+). The polypeptide is Phenylalanine--tRNA ligase alpha subunit (Bacteroides fragilis (strain ATCC 25285 / DSM 2151 / CCUG 4856 / JCM 11019 / LMG 10263 / NCTC 9343 / Onslow / VPI 2553 / EN-2)).